The chain runs to 107 residues: Latency-related protein 2 (107 aa).

Residues methionine 1–threonine 44 show a composition bias toward pro residues. The interval methionine 1–threonine 63 is disordered. 3 tandem repeats follow at residues alanine 2–histidine 17, alanine 18–histidine 33, and alanine 34–histidine 49. The segment at alanine 2–histidine 49 is 3 X 17 AA tandem repeats. The segment covering proline 46–arginine 58 has biased composition (basic residues).

This Homo sapiens (Human) protein is Latency-related protein 2.